Consider the following 102-residue polypeptide: MTQTARVKLTSTSLPKLDGVCGEIMGIGKKTGVKVKGPTPLPVKRLHVATRKSPCGNGTETYEKWEMKMHRRIININADDKAIRQLMRLKIPDDVYIELSLT.

The protein belongs to the universal ribosomal protein uS10 family. In terms of assembly, part of the 30S ribosomal subunit.

In terms of biological role, involved in the binding of tRNA to the ribosomes. This chain is Small ribosomal subunit protein uS10, found in Nitrosopumilus maritimus (strain SCM1).